Reading from the N-terminus, the 138-residue chain is uncharacterized protein (138 aa).

This is an uncharacterized protein from Bacillus subtilis (strain 168).